Here is a 397-residue protein sequence, read N- to C-terminus: Elongation factor Tu (397 aa).

In terms of domain architecture, tr-type G spans 10–207 (KPHVNIGTIG…AVDTYIEEPK (198 aa)). Positions 19–26 (GHVDHGKT) are G1. 19-26 (GHVDHGKT) provides a ligand contact to GTP. Residue Thr26 coordinates Mg(2+). Residues 60–64 (GITIN) are G2. The G3 stretch occupies residues 81 to 84 (DCPG). Residues 81–85 (DCPGH) and 136–139 (NKID) contribute to the GTP site. The G4 stretch occupies residues 136–139 (NKID). The tract at residues 177-179 (SAL) is G5.

It belongs to the TRAFAC class translation factor GTPase superfamily. Classic translation factor GTPase family. EF-Tu/EF-1A subfamily. As to quaternary structure, monomer.

It localises to the cytoplasm. The catalysed reaction is GTP + H2O = GDP + phosphate + H(+). Functionally, GTP hydrolase that promotes the GTP-dependent binding of aminoacyl-tRNA to the A-site of ribosomes during protein biosynthesis. The chain is Elongation factor Tu from Metamycoplasma hominis (strain ATCC 23114 / DSM 25592 / NBRC 14850 / NCTC 10111 / PG21) (Mycoplasma hominis).